The primary structure comprises 346 residues: O-methyltransferase atr3 (346 aa).

Disordered stretches follow at residues 1 to 22 and 52 to 88; these read MTSVDTMPPPMVRLESQPDDLM and GLKSHPVVTTGTEKTGVMPPLQPESKKNNKGVPWYHA. Residues 190–191 and 217–218 contribute to the S-adenosyl-L-methionine site; these read DL and DI.

This sequence belongs to the class I-like SAM-binding methyltransferase superfamily. In terms of assembly, homodimer.

It catalyses the reaction 4-O-demethylbarbatate + S-adenosyl-L-methionine = proatranorin I + S-adenosyl-L-homocysteine. The protein operates within secondary metabolite biosynthesis; terpenoid biosynthesis. Functionally, O-methyltransferase; part of the gene cluster that mediates the biosynthesis of atranorin, a depside of polyketide origin that accumulates in the cortical or medullary layers of lichen thalli. Atr3 methylates the carboxyl group of 4-O-demethylbarbatic acid to yield proatranorin I. Atr3 is also able to methylate the atr2 product proatranorin III to produce the final compound atranorin. The first step in the pathway is performed by the non-reducing polyketide synthase atr1 that produces 4-O-demethylbarbatic acid composed of two 3-methylorsellinic acid (3MOA) moieties. The pathway continues with the actions of the cytochrome P450 monooygenase atr2 that catalizes the oxidation of c-9 and the O-methyltransferase atr3 that performs the methylation of the carboxyl group to yield atranorin, via the proatranorin II and III intermediates if atr2 acts first, or the proatranorin I intermediate if atr3 acts first. The protein is O-methyltransferase atr3 of Stereocaulon alpinum (Alpine snow lichen).